The chain runs to 173 residues: T-cell surface glycoprotein CD3 delta chain (173 aa).

Positions 1 to 21 (MEHSGILASLILIAVLPQGSP) are cleaved as a signal peptide. The Extracellular segment spans residues 22–105 (FKIQVTEYED…CVELDSGTMA (84 aa)). Residues Cys37 and Cys73 are joined by a disulfide bond. Asn38, Asn55, and Asn74 each carry an N-linked (GlcNAc...) asparagine glycan. The helical transmembrane segment at 106–126 (GVIFIDLIATLLLALGVYCFA) threads the bilayer. The Cytoplasmic portion of the chain corresponds to 127–173 (GHETGRPSGAAEVQALLKNEQLYQPLRDREDTQYSRLGGNWPRNKKS). One can recognise an ITAM domain in the interval 138 to 166 (EVQALLKNEQLYQPLRDREDTQYSRLGGN). Tyr149 and Tyr160 each carry phosphotyrosine.

As to quaternary structure, the TCR-CD3 complex is composed of a CD3D/CD3E and a CD3G/CD3E heterodimers that preferentially associate with TCRalpha and TCRbeta, respectively, to form TCRalpha/CD3E/CD3G and TCRbeta/CD3G/CD3E trimers. In turn, the hexamer interacts with CD3Z homodimer to form the TCR-CD3 complex. Alternatively, TCRalpha and TCRbeta can be replaced by TCRgamma and TCRdelta. Interacts with coreceptors CD4 and CD8. In terms of processing, phosphorylated on Tyr residues after T-cell receptor triggering by LCK in association with CD4/CD8.

The protein localises to the membrane. Its function is as follows. Part of the TCR-CD3 complex present on T-lymphocyte cell surface that plays an essential role in adaptive immune response. When antigen presenting cells (APCs) activate T-cell receptor (TCR), TCR-mediated signals are transmitted across the cell membrane by the CD3 chains CD3D, CD3E, CD3G and CD3Z. All CD3 chains contain immunoreceptor tyrosine-based activation motifs (ITAMs) in their cytoplasmic domain. Upon TCR engagement, these motifs become phosphorylated by Src family protein tyrosine kinases LCK and FYN, resulting in the activation of downstream signaling pathways. In addition of this role of signal transduction in T-cell activation, CD3D plays an essential role in thymocyte differentiation. Indeed, participates in correct intracellular TCR-CD3 complex assembly and surface expression. In absence of a functional TCR-CD3 complex, thymocytes are unable to differentiate properly. Interacts with CD4 and CD8 and thus serves to establish a functional link between the TCR and coreceptors CD4 and CD8, which is needed for activation and positive selection of CD4 or CD8 T-cells. The chain is T-cell surface glycoprotein CD3 delta chain (Cd3d) from Mus musculus (Mouse).